We begin with the raw amino-acid sequence, 203 residues long: Small ribosomal subunit protein uS4c (203 aa).

Positions 15-43 are disordered; the sequence is LGSLPGLTSKRPRSGSDLRNQSRSGKRSQ. One can recognise an S4 RNA-binding domain in the interval 89–169; sequence MRLDNILFRL…LPKHLTLHSL (81 aa).

The protein belongs to the universal ribosomal protein uS4 family. As to quaternary structure, part of the 30S ribosomal subunit. Contacts protein S5. The interaction surface between S4 and S5 is involved in control of translational fidelity.

The protein localises to the plastid. Its subcellular location is the chloroplast. In terms of biological role, one of the primary rRNA binding proteins, it binds directly to 16S rRNA where it nucleates assembly of the body of the 30S subunit. With S5 and S12 plays an important role in translational accuracy. The protein is Small ribosomal subunit protein uS4c (rps4) of Illicium oligandrum (Star anise).